The sequence spans 240 residues: Orotidine 5'-phosphate decarboxylase (240 aa).

Residues aspartate 15, lysine 37, 64 to 73 (DLKYHDIPNT), threonine 125, arginine 186, glutamine 195, glycine 215, and arginine 216 contribute to the substrate site. Lysine 66 serves as the catalytic Proton donor.

The protein belongs to the OMP decarboxylase family. Type 1 subfamily. In terms of assembly, homodimer.

The catalysed reaction is orotidine 5'-phosphate + H(+) = UMP + CO2. The protein operates within pyrimidine metabolism; UMP biosynthesis via de novo pathway; UMP from orotate: step 2/2. Its function is as follows. Catalyzes the decarboxylation of orotidine 5'-monophosphate (OMP) to uridine 5'-monophosphate (UMP). The sequence is that of Orotidine 5'-phosphate decarboxylase from Pelobacter propionicus (strain DSM 2379 / NBRC 103807 / OttBd1).